The following is a 634-amino-acid chain: Growth hormone receptor (634 aa).

The N-terminal stretch at 1-18 is a signal peptide; that stretch reads MDLWQLLLTLAVAGSSDA. Over 19–260 the chain is Extracellular; the sequence is FSGSEATPAF…NPSACEEDFQ (242 aa). The N-linked (GlcNAc...) asparagine glycan is linked to asparagine 46. Cysteine 56 and cysteine 66 form a disulfide bridge. A glycan (N-linked (GlcNAc...) asparagine) is linked at asparagine 73. Residues cysteine 97 and cysteine 108 are joined by a disulfide bond. A glycan (N-linked (GlcNAc...) asparagine) is linked at asparagine 111. A disulfide bridge connects residues cysteine 122 and cysteine 136. A Fibronectin type-III domain is found at 147–250; it reads PPVGLNWTLL…EVLLITFPQM (104 aa). Asparagine 152, asparagine 157, and asparagine 196 each carry an N-linked (GlcNAc...) asparagine glycan. The WSXWS motif signature appears at 236–240; the sequence is YGKFS. The chain crosses the membrane as a helical span at residues 261-284; it reads FPWFLIIMFGILGLAVTLFLLIFS. The Cytoplasmic segment spans residues 285–634; the sequence is KQQRIKMLIL…STDQLNKIMP (350 aa). The required for JAK2 binding stretch occupies residues 290–375; the sequence is KMLILPPVPV…HEKSLNIFGA (86 aa). The Box 1 motif motif lies at 293–301; the sequence is ILPPVPVPK. A UbE motif motif is present at residues 336-345; that stretch reads DSWVEFIELD. Serine 337 carries the phosphoserine modification. Phosphotyrosine is present on residues tyrosine 483 and tyrosine 591.

The protein belongs to the type I cytokine receptor family. Type 1 subfamily. As to quaternary structure, on growth hormone (GH) binding, forms homodimers and binds JAK2 via a box 1-containing domain. Post-translationally, the soluble form (GHBP) is produced by phorbol ester-promoted proteolytic cleavage at the cell surface (shedding) by ADAM17/TACE. Shedding is inhibited by growth hormone (GH) binding to the receptor probably due to a conformational change in GHR rendering the receptor inaccessible to ADAM17. On GH binding, phosphorylated on tyrosine residues in the cytoplasmic domain by JAK2. In terms of processing, ubiquitinated by the ECS(SOCS2) complex following ligand-binding and phosphorylation by JAK2, leading to its degradation by the proteasome. Regulation by the ECS(SOCS2) complex acts as a negative feedback loop of growth hormone receptor signaling. Ubiquitination is not sufficient for GHR internalization.

The protein localises to the cell membrane. The protein resides in the secreted. Functionally, receptor for pituitary gland growth hormone (GH1) involved in regulating postnatal body growth. On ligand binding, couples to the JAK2/STAT5 pathway. In terms of biological role, the soluble form (GHBP) acts as a reservoir of growth hormone in plasma and may be a modulator/inhibitor of GH signaling. This chain is Growth hormone receptor (GHR), found in Bos indicus (Zebu).